The following is a 211-amino-acid chain: Leucine efflux protein (211 aa).

6 helical membrane passes run 5–25 (FGVLNFWTYVVGAFFIVLVPG), 49–69 (GVFIGDAVLMFLAWAGVAALI), 72–92 (TPVLFNIVRYLGALYLLWLGG), 122–142 (VLSLTNPKAILFYVSFFVQFI), 153–173 (FLILATTLELISFMYMSFLIF), and 191–211 (LGNGLIGLLFVGFAARLASLH).

Belongs to the Rht family.

Its subcellular location is the cell inner membrane. It catalyses the reaction L-leucine(in) + H(+)(out) = L-leucine(out) + H(+)(in). Its function is as follows. Exporter of leucine. The protein is Leucine efflux protein (leuE) of Enterobacter sp. (strain 638).